We begin with the raw amino-acid sequence, 152 residues long: MMKKIDVKILDPRVGQQFPLPTYATSGSAGLDLRACLDDAVELAPGATTLLPTGLAIHIADPSLAAVILPRSGLGHKHGVVLGNLVGLIDSDYQGQLMVSVWNRGQQSFIIEPGERIAQMVFVPVVQAEFNLVEEFDATDRGEGGFGHSGRK.

Residues R71 to G73, N84, L88 to D90, and M98 each bind substrate.

The protein belongs to the dUTPase family. Mg(2+) serves as cofactor.

It carries out the reaction dUTP + H2O = dUMP + diphosphate + H(+). Its pathway is pyrimidine metabolism; dUMP biosynthesis; dUMP from dCTP (dUTP route): step 2/2. Functionally, this enzyme is involved in nucleotide metabolism: it produces dUMP, the immediate precursor of thymidine nucleotides and it decreases the intracellular concentration of dUTP so that uracil cannot be incorporated into DNA. The polypeptide is Deoxyuridine 5'-triphosphate nucleotidohydrolase (Klebsiella pneumoniae (strain 342)).